The following is a 717-amino-acid chain: Polyribonucleotide nucleotidyltransferase (717 aa).

Positions 488 and 494 each coordinate Mg(2+). The KH domain occupies 555-614 (PRIEVMNIPVDKIREVIGSGGKVIREIVEKTGAKINIEDDGTVKIASSSGKEIEAARKWI). Residues 624–692 (GQIYEGTVVK…ERGKVRLSMK (69 aa)) form the S1 motif domain.

The protein belongs to the polyribonucleotide nucleotidyltransferase family. The cofactor is Mg(2+).

Its subcellular location is the cytoplasm. The enzyme catalyses RNA(n+1) + phosphate = RNA(n) + a ribonucleoside 5'-diphosphate. Involved in mRNA degradation. Catalyzes the phosphorolysis of single-stranded polyribonucleotides processively in the 3'- to 5'-direction. The sequence is that of Polyribonucleotide nucleotidyltransferase from Sinorhizobium fredii (strain NBRC 101917 / NGR234).